Reading from the N-terminus, the 131-residue chain is Photosystem II extrinsic protein U (131 aa).

An N-terminal signal peptide occupies residues 1–28; sequence MKFISRLLVACSLLIGLMGFLGADLAQA. A propeptide spanning residues 29–36 is cleaved from the precursor; sequence LTPNPILA.

This sequence belongs to the PsbU family. PSII is composed of 1 copy each of membrane proteins PsbA, PsbB, PsbC, PsbD, PsbE, PsbF, PsbH, PsbI, PsbJ, PsbK, PsbL, PsbM, PsbT, PsbX, PsbY, PsbZ, Psb30/Ycf12, peripheral proteins PsbO, CyanoQ (PsbQ), PsbU, PsbV and a large number of cofactors. It forms dimeric complexes.

It is found in the cellular thylakoid membrane. In terms of biological role, one of the extrinsic, lumenal subunits of photosystem II (PSII). PSII is a light-driven water plastoquinone oxidoreductase, using light energy to abstract electrons from H(2)O, generating a proton gradient subsequently used for ATP formation. The extrinsic proteins stabilize the structure of photosystem II oxygen-evolving complex (OEC), the ion environment of oxygen evolution and protect the OEC against heat-induced inactivation. May modulate the Cl(-) requirement for oxygen evolution. In Synechocystis sp. (strain ATCC 27184 / PCC 6803 / Kazusa), this protein is Photosystem II extrinsic protein U.